The chain runs to 238 residues: Urease subunit alpha (238 aa).

Positions 1–102 are urease gamma; that stretch reads MKLTPKELDK…LVTVHTPIEA (102 aa). The urease beta stretch occupies residues 103–238; the sequence is NGKLVPGELF…DDNYVKTIKE (136 aa).

It in the N-terminal section; belongs to the urease gamma subunit family. This sequence in the C-terminal section; belongs to the urease beta subunit family. Heterohexamer of 3 UreA (alpha) and 3 UreB (beta) subunits.

The protein localises to the cytoplasm. The catalysed reaction is urea + 2 H2O + H(+) = hydrogencarbonate + 2 NH4(+). The protein operates within nitrogen metabolism; urea degradation; CO(2) and NH(3) from urea (urease route): step 1/1. The polypeptide is Urease subunit alpha (Helicobacter pylori (strain P12)).